Here is a 491-residue protein sequence, read N- to C-terminus: Aspartyl/glutamyl-tRNA(Asn/Gln) amidotransferase subunit B (491 aa).

The protein belongs to the GatB/GatE family. GatB subfamily. In terms of assembly, heterotrimer of A, B and C subunits.

It catalyses the reaction L-glutamyl-tRNA(Gln) + L-glutamine + ATP + H2O = L-glutaminyl-tRNA(Gln) + L-glutamate + ADP + phosphate + H(+). It carries out the reaction L-aspartyl-tRNA(Asn) + L-glutamine + ATP + H2O = L-asparaginyl-tRNA(Asn) + L-glutamate + ADP + phosphate + 2 H(+). Allows the formation of correctly charged Asn-tRNA(Asn) or Gln-tRNA(Gln) through the transamidation of misacylated Asp-tRNA(Asn) or Glu-tRNA(Gln) in organisms which lack either or both of asparaginyl-tRNA or glutaminyl-tRNA synthetases. The reaction takes place in the presence of glutamine and ATP through an activated phospho-Asp-tRNA(Asn) or phospho-Glu-tRNA(Gln). The polypeptide is Aspartyl/glutamyl-tRNA(Asn/Gln) amidotransferase subunit B (Burkholderia ambifaria (strain ATCC BAA-244 / DSM 16087 / CCUG 44356 / LMG 19182 / AMMD) (Burkholderia cepacia (strain AMMD))).